The sequence spans 1261 residues: SNF2 domain-containing protein CLASSY 2 (1261 aa).

The tract at residues 458-479 (FQKRTSRSSRSVAPKTEDSDEP) is disordered. The region spanning 704–904 (DPTSGNIGGC…FNTLCLARPK (201 aa)) is the Helicase ATP-binding domain. 717–724 (HSPGAGKT) is a binding site for ATP. The DEAH box motif lies at 855–858 (DEGH). The Helicase C-terminal domain occupies 1067-1232 (FVLNLIFRVV…DPSLWQAEKI (166 aa)).

The protein belongs to the helicase family. In terms of assembly, interacts with NRPD1 and SHH1.

It localises to the nucleus. Its function is as follows. Probable chromatin remodeling factor. The polypeptide is SNF2 domain-containing protein CLASSY 2 (CLSY2) (Arabidopsis thaliana (Mouse-ear cress)).